The chain runs to 294 residues: Acetylglutamate kinase (294 aa).

Substrate-binding positions include 63-64 (GG), arginine 85, and asparagine 188.

It belongs to the acetylglutamate kinase family. ArgB subfamily.

It is found in the cytoplasm. The enzyme catalyses N-acetyl-L-glutamate + ATP = N-acetyl-L-glutamyl 5-phosphate + ADP. It functions in the pathway amino-acid biosynthesis; L-arginine biosynthesis; N(2)-acetyl-L-ornithine from L-glutamate: step 2/4. Functionally, catalyzes the ATP-dependent phosphorylation of N-acetyl-L-glutamate. This is Acetylglutamate kinase from Methanococcus maripaludis (strain DSM 14266 / JCM 13030 / NBRC 101832 / S2 / LL).